The primary structure comprises 160 residues: UPF0225 protein PputW619_1140 (160 aa).

Belongs to the UPF0225 family.

The protein is UPF0225 protein PputW619_1140 of Pseudomonas putida (strain W619).